The primary structure comprises 216 residues: Probable nicotinate-nucleotide adenylyltransferase (216 aa).

Belongs to the NadD family.

The catalysed reaction is nicotinate beta-D-ribonucleotide + ATP + H(+) = deamido-NAD(+) + diphosphate. It functions in the pathway cofactor biosynthesis; NAD(+) biosynthesis; deamido-NAD(+) from nicotinate D-ribonucleotide: step 1/1. Functionally, catalyzes the reversible adenylation of nicotinate mononucleotide (NaMN) to nicotinic acid adenine dinucleotide (NaAD). The chain is Probable nicotinate-nucleotide adenylyltransferase from Geotalea uraniireducens (strain Rf4) (Geobacter uraniireducens).